We begin with the raw amino-acid sequence, 440 residues long: MVKVGFVSLGCNKNLVDSEIMMGACKEAGFEITPNAEDADVIVINTCGFINDAKQESIDTILEMAEYKNKKCKFLIVTGCLSQRYKDDILKELPEVDAILGVKEMLKLPNVIKKLYEGESKLQVFDDKPTFVYTSSMPRLIATPKFYAYIKIAEGCNNRCSYCSIPLIRGNYTSRYIDDIIQEARKLSEDGYKEIVLTAQDTTKYGIDIYQKKMLATLLQKLSEIDNIKWIRFLYSYPEDIDDELLNIVKSLPKVVKYFDIPIQHINNRILKLMNRKTSSEGIKELIQRIRSAFDEVVIRTTVMVGFPTESEDEFEELYEFVKWAKFDRLGAFMYSQEEGTPAADLPQTDDETKVKRYERILNLQRKISLERNRKRISKKYEVVIEGRDRNNFYIARSQFEAPEVDGKIIVFSKRKLLPGEFVVVKILDAFEYDLVGEVI.

The MTTase N-terminal domain maps to 2–117 (VKVGFVSLGC…LPNVIKKLYE (116 aa)). [4Fe-4S] cluster is bound by residues C11, C47, C80, C156, C160, and C163. The 230-residue stretch at 142 to 371 (ATPKFYAYIK…LNLQRKISLE (230 aa)) folds into the Radical SAM core domain. The TRAM domain maps to 374 to 440 (RKRISKKYEV…FEYDLVGEVI (67 aa)).

It belongs to the methylthiotransferase family. RimO subfamily. It depends on [4Fe-4S] cluster as a cofactor.

The protein localises to the cytoplasm. The catalysed reaction is L-aspartate(89)-[ribosomal protein uS12]-hydrogen + (sulfur carrier)-SH + AH2 + 2 S-adenosyl-L-methionine = 3-methylsulfanyl-L-aspartate(89)-[ribosomal protein uS12]-hydrogen + (sulfur carrier)-H + 5'-deoxyadenosine + L-methionine + A + S-adenosyl-L-homocysteine + 2 H(+). In terms of biological role, catalyzes the methylthiolation of an aspartic acid residue of ribosomal protein uS12. In Caldicellulosiruptor saccharolyticus (strain ATCC 43494 / DSM 8903 / Tp8T 6331), this protein is Ribosomal protein uS12 methylthiotransferase RimO.